A 232-amino-acid polypeptide reads, in one-letter code: MEDFKQSVNTYSSEGRIHQIEYAMKAMNLGTTTIGVRTKEFVILCSEKKILSTLQNPKSVVKHYKIYDHIVLGFSGISGDTKTIVKRSRDFCISHTHMYGENISVERLLKYLSSLSLRFGEEDEAKMIFRRPFGVSLIIAGFDTEPRLYSLDPSGSYISYKAKAIGSGHEVVEGILENEYEEYSGLDQSLRKVLCTLSKVMKDKISKDNVEVVVVTQEESKFLTPEEVSVYL.

The protein belongs to the peptidase T1A family. In terms of assembly, the 26S proteasome consists of a 20S proteasome core and two 19S regulatory subunits. The 20S proteasome core is composed of 28 subunits that are arranged in four stacked rings, resulting in a barrel-shaped structure. The two end rings are each formed by seven alpha subunits, and the two central rings are each formed by seven beta subunits. The catalytic chamber with the active sites is on the inside of the barrel.

Its subcellular location is the cytoplasm. The protein localises to the nucleus. In terms of biological role, the proteasome degrades poly-ubiquitinated proteins in the cytoplasm and in the nucleus. It is essential for the regulated turnover of proteins and for the removal of misfolded proteins. The proteasome is a multicatalytic proteinase complex that is characterized by its ability to cleave peptides with Arg, Phe, Tyr, Leu, and Glu adjacent to the leaving group at neutral or slightly basic pH. It has an ATP-dependent proteolytic activity. The protein is Probable proteasome subunit alpha type-5 (PUP2) of Encephalitozoon cuniculi (strain GB-M1) (Microsporidian parasite).